Consider the following 437-residue polypeptide: MIQSEEDLEYERNVEMFRLKRLIAKLESMKGSGTSMITLIINFKDQINIHARMLAEEVGKASNIKSRVTRQNVTDALTSTLEKLKLYNKTPPNGLVIFCGLVQQEDGGEKMIKIDLEPFKPINTTLYKCDSVFHTEEVRKLLEDNDKFGFIIMDGNGSLFGTLQGSTRTVLLKFNVDLPKKHGRGGQSANRFARIRIEKRRNYLRKVAESTTACFITNDMPNVKGLILAGSAEFKNDLQKSDLFDLRLQPIVIKLVDISYGGENGFNQAIELSSDALKSVKFIHEKKVIGKFFDEIAKDTGKYVFGIKDTLEAMDMGSVDILIIYENLEYNRLILRDANDNIVNETLHKNKCPSGSKYKNETTGVEYEVLDNIPLTEWFMDNYKKYVSHLEIVTDKSSEGSQFLKGFGGIGGILRYKMDTDFDDTENNNEWNDDDFI.

This sequence belongs to the eukaryotic release factor 1 family. Heterodimer of two subunits, one of which binds GTP.

It localises to the cytoplasm. Its function is as follows. Directs the termination of nascent peptide synthesis (translation) in response to the termination codons UAA and possibly also UAG and UGA. In Didinium nasutum, this protein is Eukaryotic peptide chain release factor subunit 1 (eRF1).